The primary structure comprises 467 residues: ATP synthase subunit beta (467 aa).

Residue 153-160 coordinates ATP; it reads GGAGVGKT.

The protein belongs to the ATPase alpha/beta chains family. In terms of assembly, F-type ATPases have 2 components, CF(1) - the catalytic core - and CF(0) - the membrane proton channel. CF(1) has five subunits: alpha(3), beta(3), gamma(1), delta(1), epsilon(1). CF(0) has three main subunits: a(1), b(2) and c(9-12). The alpha and beta chains form an alternating ring which encloses part of the gamma chain. CF(1) is attached to CF(0) by a central stalk formed by the gamma and epsilon chains, while a peripheral stalk is formed by the delta and b chains.

It localises to the cell membrane. The enzyme catalyses ATP + H2O + 4 H(+)(in) = ADP + phosphate + 5 H(+)(out). In terms of biological role, produces ATP from ADP in the presence of a proton gradient across the membrane. The catalytic sites are hosted primarily by the beta subunits. In Lactiplantibacillus plantarum (strain ATCC BAA-793 / NCIMB 8826 / WCFS1) (Lactobacillus plantarum), this protein is ATP synthase subunit beta.